The chain runs to 160 residues: Lipoprotein signal peptidase (160 aa).

Helical transmembrane passes span 7–27 (VIYYLLAAAVIALDQWTKWLV), 61–81 (GQFWLFYLVTVIVVAGIIIYI), and 91–111 (AGIGLGLMLGGAIGNFIDRVF). Residues aspartate 117 and aspartate 135 contribute to the active site. Residues 133–153 (IADSALTVGVILLFIHMFFFA) traverse the membrane as a helical segment.

Belongs to the peptidase A8 family.

It is found in the cell membrane. It carries out the reaction Release of signal peptides from bacterial membrane prolipoproteins. Hydrolyzes -Xaa-Yaa-Zaa-|-(S,diacylglyceryl)Cys-, in which Xaa is hydrophobic (preferably Leu), and Yaa (Ala or Ser) and Zaa (Gly or Ala) have small, neutral side chains.. Its pathway is protein modification; lipoprotein biosynthesis (signal peptide cleavage). Functionally, this protein specifically catalyzes the removal of signal peptides from prolipoproteins. This chain is Lipoprotein signal peptidase, found in Geobacillus thermodenitrificans (strain NG80-2).